Here is a 346-residue protein sequence, read N- to C-terminus: Dihydroorotase (346 aa).

2 residues coordinate Zn(2+): histidine 13 and histidine 15. Residues 15–17 and asparagine 41 contribute to the substrate site; that span reads HLR. 3 residues coordinate Zn(2+): lysine 99, histidine 136, and histidine 174. An N6-carboxylysine modification is found at lysine 99. Histidine 136 lines the substrate pocket. A substrate-binding site is contributed by leucine 219. Residue aspartate 247 participates in Zn(2+) binding. Aspartate 247 is an active-site residue. Positions 251 and 263 each coordinate substrate.

Belongs to the metallo-dependent hydrolases superfamily. DHOase family. Class II DHOase subfamily. In terms of assembly, homodimer. Zn(2+) serves as cofactor.

The catalysed reaction is (S)-dihydroorotate + H2O = N-carbamoyl-L-aspartate + H(+). The protein operates within pyrimidine metabolism; UMP biosynthesis via de novo pathway; (S)-dihydroorotate from bicarbonate: step 3/3. Its function is as follows. Catalyzes the reversible cyclization of carbamoyl aspartate to dihydroorotate. The protein is Dihydroorotase of Chelativorans sp. (strain BNC1).